The primary structure comprises 591 residues: Aspartate--tRNA ligase (591 aa).

L-aspartate is bound at residue Glu-173. The tract at residues 197-200 (QLFK) is aspartate. Arg-219 is a binding site for L-aspartate. ATP contacts are provided by residues 219–221 (RDE) and Gln-228. His-448 contributes to the L-aspartate binding site. Glu-482 serves as a coordination point for ATP. L-aspartate is bound at residue Arg-489. 534–537 (GLDR) lines the ATP pocket.

Belongs to the class-II aminoacyl-tRNA synthetase family. Type 1 subfamily. In terms of assembly, homodimer.

Its subcellular location is the cytoplasm. It catalyses the reaction tRNA(Asp) + L-aspartate + ATP = L-aspartyl-tRNA(Asp) + AMP + diphosphate. Catalyzes the attachment of L-aspartate to tRNA(Asp) in a two-step reaction: L-aspartate is first activated by ATP to form Asp-AMP and then transferred to the acceptor end of tRNA(Asp). This Shewanella sp. (strain MR-7) protein is Aspartate--tRNA ligase.